Consider the following 212-residue polypeptide: HTH-type transcriptional regulator RutR (212 aa).

An HTH tetR-type domain is found at 17–77 (SAKKKAILSA…AVLRQILDIW (61 aa)). The segment at residues 39–58 (TRLEQIAELAGVSKTNLLYY) is a DNA-binding region (H-T-H motif).

In terms of assembly, homodimer.

In terms of biological role, master transcription regulator which represses the degradation of pyrimidines (rutABCDEFG) and purines (gcl operon) for maintenance of metabolic balance between pyrimidines and purines. It also regulates the synthesis of pyrimidine nucleotides and arginine from glutamine (carAB) and the supply of glutamate (gadABWX). The protein is HTH-type transcriptional regulator RutR (rutR) of Escherichia coli O157:H7.